The chain runs to 513 residues: Interferon alpha/beta receptor 2 (513 aa).

The signal sequence occupies residues 1–21 (MRSRCTVSAVGLLSLCLVVSA). Topologically, residues 22–242 (SLETITPSAF…GQESGLSESA (221 aa)) are extracellular. 2 disulfide bridges follow: Cys-39/Cys-123 and Cys-85/Cys-93. 5 N-linked (GlcNAc...) asparagine glycosylation sites follow: Asn-42, Asn-58, Asn-65, Asn-78, and Asn-84. 3 N-linked (GlcNAc...) asparagine glycosylation sites follow: Asn-149, Asn-191, and Asn-195. Cys-210 and Cys-227 are disulfide-bonded. Residues 243 to 263 (IVGITTSCLVVMVFVSTIVML) traverse the membrane as a helical segment. The Cytoplasmic segment spans residues 264–513 (KRIGYICLKD…ADVGDGYIMR (250 aa)). The disordered stretch occupies residues 334 to 402 (GYTMHGLTGK…DPTGPYERRK (69 aa)). A Phosphotyrosine modification is found at Tyr-335. Residues 344–354 (PLQQTSDTSAS) are compositionally biased toward polar residues. Over residues 377-389 (GAEPELPTEAGAG) the composition is skewed to low complexity. Phosphoserine is present on Ser-403. The interval 421-444 (GDNIIFNVNLNSVFLRVLHDEDAS) is mediates interaction with STAT2 (and required for the recruitment of USP18). Phosphoserine occurs at positions 448 and 465. The interval 458-513 (EGPQRTESDLRIAGGDRTQPPLPSLPSQDLWTEDGSSEKSDTSDSDADVGDGYIMR) is disordered. Tyr-510 carries the post-translational modification Phosphotyrosine.

Belongs to the type II cytokine receptor family. In terms of assembly, heterodimer with IFNAR1; forming the receptor for type I interferon. Interacts with the transcriptional factors STAT1 and STAT2. Interacts with JAK1. Interacts with USP18; indirectly via STAT2, it negatively regulates the assembly of the ternary interferon-IFNAR1-IFNAR2 complex and therefore type I interferon signaling. Post-translationally, phosphorylated on tyrosine residues upon interferon binding. Phosphorylation at Tyr-335 or Tyr-510 are sufficient to mediate interferon dependent activation of STAT1, STAT2 and STAT3 leading to antiproliferative effects on many different cell types. As to expression, widely expressed. Detected in liver, testis, kidney, salivary gland, thymus, brain, lung and placenta. Isoform 1, isoform 2 and isoform 3 are expressed in brain.

It is found in the cell membrane. Its subcellular location is the secreted. Functionally, together with IFNAR1, forms the heterodimeric receptor for type I interferons (including interferons alpha, beta, epsilon, omega and kappa). Type I interferon binding activates the JAK-STAT signaling cascade, resulting in transcriptional activation or repression of interferon-regulated genes that encode the effectors of the interferon response. Mechanistically, type I interferon-binding brings the IFNAR1 and IFNAR2 subunits into close proximity with one another, driving their associated Janus kinases (JAKs) (TYK2 bound to IFNAR1 and JAK1 bound to IFNAR2) to cross-phosphorylate one another. The activated kinases phosphorylate specific tyrosine residues on the intracellular domains of IFNAR1 and IFNAR2, forming docking sites for the STAT transcription factors (STAT1, STAT2 and STAT). STAT proteins are then phosphorylated by the JAKs, promoting their translocation into the nucleus to regulate expression of interferon-regulated genes. Its function is as follows. May be potent inhibitors of type I IFN receptor activity. The chain is Interferon alpha/beta receptor 2 (Ifnar2) from Mus musculus (Mouse).